Reading from the N-terminus, the 419-residue chain is Histidine--tRNA ligase (419 aa).

Belongs to the class-II aminoacyl-tRNA synthetase family. In terms of assembly, homodimer.

It is found in the cytoplasm. It catalyses the reaction tRNA(His) + L-histidine + ATP = L-histidyl-tRNA(His) + AMP + diphosphate + H(+). In Halothermothrix orenii (strain H 168 / OCM 544 / DSM 9562), this protein is Histidine--tRNA ligase.